Consider the following 258-residue polypeptide: 6-carboxyhexanoate--CoA ligase (258 aa).

This sequence belongs to the BioW family. Homodimer. Mg(2+) is required as a cofactor.

The enzyme catalyses heptanedioate + ATP + CoA = 6-carboxyhexanoyl-CoA + AMP + diphosphate. Its pathway is metabolic intermediate metabolism; pimeloyl-CoA biosynthesis; pimeloyl-CoA from pimelate: step 1/1. Its function is as follows. Catalyzes the transformation of pimelate into pimeloyl-CoA with concomitant hydrolysis of ATP to AMP. This chain is 6-carboxyhexanoate--CoA ligase, found in Bacillus subtilis (strain BSn5).